Here is a 280-residue protein sequence, read N- to C-terminus: Putative pyruvate, phosphate dikinase regulatory protein (280 aa).

149-156 (GVSRSSKT) lines the ADP pocket.

This sequence belongs to the pyruvate, phosphate/water dikinase regulatory protein family. PDRP subfamily.

The catalysed reaction is N(tele)-phospho-L-histidyl/L-threonyl-[pyruvate, phosphate dikinase] + ADP = N(tele)-phospho-L-histidyl/O-phospho-L-threonyl-[pyruvate, phosphate dikinase] + AMP + H(+). The enzyme catalyses N(tele)-phospho-L-histidyl/O-phospho-L-threonyl-[pyruvate, phosphate dikinase] + phosphate + H(+) = N(tele)-phospho-L-histidyl/L-threonyl-[pyruvate, phosphate dikinase] + diphosphate. Bifunctional serine/threonine kinase and phosphorylase involved in the regulation of the pyruvate, phosphate dikinase (PPDK) by catalyzing its phosphorylation/dephosphorylation. In Novosphingobium aromaticivorans (strain ATCC 700278 / DSM 12444 / CCUG 56034 / CIP 105152 / NBRC 16084 / F199), this protein is Putative pyruvate, phosphate dikinase regulatory protein.